The primary structure comprises 142 residues: Ninjurin-2 (142 aa).

A disordered region spans residues 1–21 (MESARENIDLQPGSSDPRSQP). Over 1 to 60 (MESARENIDLQPGSSDPRSQPINLNHYATKKSVAESMLDVALFMSNAMRLKAVLEQGPSS) the chain is Extracellular. Residues 12-21 (PGSSDPRSQP) are compositionally biased toward polar residues. The helix alpha1 stretch occupies residues 25–37 (NHYATKKSVAESM). Residues 38 to 57 (LDVALFMSNAMRLKAVLEQG) are helix alpha2. Residues 61–92 (HYYTTLVTLISLSLLLQVVIGVLLVVIARLNL) form a helical membrane-spanning segment. Topologically, residues 93 to 96 (NEVE) are cytoplasmic. Residues 97–126 (KQWRLNQLNNAATILVFFTVVINVFITAFG) form a helical membrane-spanning segment. Gln-103 serves as a coordination point for cholesterol. Over 127-142 (AHKTGFLAARASRNPL) the chain is Extracellular.

Belongs to the ninjurin family. In terms of assembly, homooligomer; in response to stimuli, homooligomerizes into filaments. In contrast to NINJ1, the filament is curved toward the intracellular space, preventing its circularization on a relatively flat membrane to mediate plasma membrane rupture: curvature is caused by cholesterol-binding at the cytoplasmic leaflet. Widely expressed. In adult, higher expression in the bone marrow and peripheral blood lymphocytes, medium in the lung, lymph node, thyroid, uterus, thymus, spleen, prostate and skeletal muscle, lower in the liver, placenta, brain, heart and kidney. In embryo, higher expression in the thymus, heart and liver, lower in the spleen, lung, brain and kidney.

The protein localises to the cell membrane. Its role in unclear. In contrast to NINJ1 paralog, does not mediate plasma membrane rupture (cytolysis) downstream of necroptotic and pyroptotic programmed cell death. While it is able to oligomerize and form filaments, filaments are curved toward the intracellular space, preventing circularization to mediate plasma membrane rupture. May act as a homophilic transmembrane adhesion molecule involved in nerve regeneration. Promotes axonal growth. The polypeptide is Ninjurin-2 (Homo sapiens (Human)).